The primary structure comprises 424 residues: Enolase (424 aa).

(2R)-2-phosphoglycerate is bound at residue glutamine 165. Glutamate 207 (proton donor) is an active-site residue. Mg(2+) is bound by residues aspartate 244, glutamate 283, and aspartate 310. 4 residues coordinate (2R)-2-phosphoglycerate: lysine 335, arginine 364, serine 365, and lysine 386. Lysine 335 acts as the Proton acceptor in catalysis.

The protein belongs to the enolase family. The cofactor is Mg(2+).

It localises to the cytoplasm. The protein resides in the secreted. The protein localises to the cell surface. It carries out the reaction (2R)-2-phosphoglycerate = phosphoenolpyruvate + H2O. Its pathway is carbohydrate degradation; glycolysis; pyruvate from D-glyceraldehyde 3-phosphate: step 4/5. Catalyzes the reversible conversion of 2-phosphoglycerate (2-PG) into phosphoenolpyruvate (PEP). It is essential for the degradation of carbohydrates via glycolysis. This chain is Enolase, found in Chlamydia trachomatis serovar L2 (strain ATCC VR-902B / DSM 19102 / 434/Bu).